The following is a 235-amino-acid chain: uncharacterized protein (235 aa).

To E.coli YbeR.

This is an uncharacterized protein from Escherichia coli (strain K12).